Here is a 310-residue protein sequence, read N- to C-terminus: tRNA uridine(34) hydroxylase (310 aa).

The Rhodanese domain occupies 127-225 (KNQNTIVIDT…YLDDIPKEKN (99 aa)). Catalysis depends on cysteine 185, which acts as the Cysteine persulfide intermediate.

It belongs to the TrhO family.

The catalysed reaction is uridine(34) in tRNA + AH2 + O2 = 5-hydroxyuridine(34) in tRNA + A + H2O. In terms of biological role, catalyzes oxygen-dependent 5-hydroxyuridine (ho5U) modification at position 34 in tRNAs. This is tRNA uridine(34) hydroxylase from Prochlorococcus marinus (strain MIT 9312).